We begin with the raw amino-acid sequence, 218 residues long: Adenylate kinase (218 aa).

Residue 10–15 (GAGKGT) coordinates ATP. Residues 30–59 (STGDMLRAAVKEETPLGRKAKEVMDSGNLV) are NMP. Residues Thr-31, Arg-36, 57–59 (NLV), 85–88 (GFPR), and Gln-92 contribute to the AMP site. An LID region spans residues 122 to 159 (GRRVHPASGRTYHLTFNPPQQQGVDDETGEPLIQRVDD). ATP-binding positions include Arg-123 and 132–133 (TY). AMP-binding residues include Arg-156 and Arg-167. Residue Gly-203 participates in ATP binding.

Belongs to the adenylate kinase family. In terms of assembly, monomer.

Its subcellular location is the cytoplasm. The enzyme catalyses AMP + ATP = 2 ADP. It functions in the pathway purine metabolism; AMP biosynthesis via salvage pathway; AMP from ADP: step 1/1. Functionally, catalyzes the reversible transfer of the terminal phosphate group between ATP and AMP. Plays an important role in cellular energy homeostasis and in adenine nucleotide metabolism. The polypeptide is Adenylate kinase (Chlorobium phaeovibrioides (strain DSM 265 / 1930) (Prosthecochloris vibrioformis (strain DSM 265))).